We begin with the raw amino-acid sequence, 458 residues long: Exodeoxyribonuclease 7 large subunit (458 aa).

This sequence belongs to the XseA family. In terms of assembly, heterooligomer composed of large and small subunits.

Its subcellular location is the cytoplasm. It carries out the reaction Exonucleolytic cleavage in either 5'- to 3'- or 3'- to 5'-direction to yield nucleoside 5'-phosphates.. Functionally, bidirectionally degrades single-stranded DNA into large acid-insoluble oligonucleotides, which are then degraded further into small acid-soluble oligonucleotides. The protein is Exodeoxyribonuclease 7 large subunit of Escherichia coli O17:K52:H18 (strain UMN026 / ExPEC).